Reading from the N-terminus, the 311-residue chain is Splicing factor spf30 (311 aa).

A Tudor domain is found at 76–139 (DFTPGNLVMA…KAMPEEKRQE (64 aa)). Disordered stretches follow at residues 154-183 (RSTP…RASS) and 276-311 (STED…DEDS). Over residues 168-183 (ASMSTSPSNYASRASS) the composition is skewed to polar residues. Residue Ser173 is modified to Phosphoserine. Residues 301 to 311 (HIYNYREDEDS) show a composition bias toward basic and acidic residues.

It belongs to the SMN family. Associates with spliceosomes.

The protein localises to the nucleus. Its function is as follows. Involved in spliceosome assembly. The protein is Splicing factor spf30 (spf30) of Schizosaccharomyces pombe (strain 972 / ATCC 24843) (Fission yeast).